Reading from the N-terminus, the 185-residue chain is RTDCYGNVNRIDTTGASCKTAKPEGLSYCGVPASKTIAERDLKAMDRYKTIIKKVGEKLCVEPAVIAGIISRESHAGKVLKNGWGDRGNGFGLMQVDKRSHKPQGTWNGEVHITQGTTILTDFIKRIQKKFPSWTKDQQLKGGISAYNAGAGNVRSYARMDIGTTHDDYANDVVARAQYYKQHGY.

Disulfide bonds link Cys-4–Cys-60 and Cys-18–Cys-29. The active site involves Glu-73.

The protein belongs to the glycosyl hydrolase 23 family.

Its subcellular location is the secreted. It catalyses the reaction Hydrolysis of (1-&gt;4)-beta-linkages between N-acetylmuramic acid and N-acetyl-D-glucosamine residues in a peptidoglycan and between N-acetyl-D-glucosamine residues in chitodextrins.. The polypeptide is Lysozyme g (Cygnus atratus (Black swan)).